The following is a 179-amino-acid chain: MAKLHDYYKSSVVAELTKEFSYSSVMQVPRVEKITLNMGVGEAINDKKLLENAAADMAIISGQKPLITKARKSVAGFKIREGYPIGCKVTLRGERMWEFLERLVSIALPRVRDFRGVSAKSFDGRGNYSMGVREQIIFPEIDYDKVDRVRGLDITITTSANTDAEGRALLAAFNFPFRK.

The protein belongs to the universal ribosomal protein uL5 family. In terms of assembly, part of the 50S ribosomal subunit; part of the 5S rRNA/L5/L18/L25 subcomplex. Contacts the 5S rRNA and the P site tRNA. Forms a bridge to the 30S subunit in the 70S ribosome.

Its function is as follows. This is one of the proteins that bind and probably mediate the attachment of the 5S RNA into the large ribosomal subunit, where it forms part of the central protuberance. In the 70S ribosome it contacts protein S13 of the 30S subunit (bridge B1b), connecting the 2 subunits; this bridge is implicated in subunit movement. Contacts the P site tRNA; the 5S rRNA and some of its associated proteins might help stabilize positioning of ribosome-bound tRNAs. The protein is Large ribosomal subunit protein uL5 of Aliivibrio salmonicida (strain LFI1238) (Vibrio salmonicida (strain LFI1238)).